Reading from the N-terminus, the 274-residue chain is Orotidine 5'-phosphate decarboxylase (274 aa).

The Proton donor role is filled by Lys95.

Belongs to the OMP decarboxylase family. Type 2 subfamily.

The catalysed reaction is orotidine 5'-phosphate + H(+) = UMP + CO2. It functions in the pathway pyrimidine metabolism; UMP biosynthesis via de novo pathway; UMP from orotate: step 2/2. This chain is Orotidine 5'-phosphate decarboxylase, found in Variovorax paradoxus (strain S110).